The following is a 283-amino-acid chain: Shikimate dehydrogenase (NADP(+)) (283 aa).

Residues 16–18 (SLS) and Thr-63 contribute to the shikimate site. The active-site Proton acceptor is Lys-67. Residue Asp-79 coordinates NADP(+). Asn-88 and Asp-103 together coordinate shikimate. Residues 128 to 132 (GAGGA), Ala-223, and Gly-243 each bind NADP(+).

This sequence belongs to the shikimate dehydrogenase family. Homodimer.

It catalyses the reaction shikimate + NADP(+) = 3-dehydroshikimate + NADPH + H(+). It participates in metabolic intermediate biosynthesis; chorismate biosynthesis; chorismate from D-erythrose 4-phosphate and phosphoenolpyruvate: step 4/7. Involved in the biosynthesis of the chorismate, which leads to the biosynthesis of aromatic amino acids. Catalyzes the reversible NADPH linked reduction of 3-dehydroshikimate (DHSA) to yield shikimate (SA). This Xanthomonas campestris pv. campestris (strain 8004) protein is Shikimate dehydrogenase (NADP(+)).